Reading from the N-terminus, the 341-residue chain is Protein quaking-A (341 aa).

One can recognise a KH domain in the interval F87 to V153. An SH3-binding motif is present at residues P276–P279. A Nuclear localization signal motif is present at residues R324 to R330.

This sequence belongs to the quaking family. Homodimer; does not require RNA to homodimerize.

It is found in the cytoplasm. The protein resides in the nucleus. Its function is as follows. RNA reader protein, which recognizes and binds specific RNAs, thereby regulating RNA metabolic processes, such as pre-mRNA splicing, circular RNA (circRNA) formation, mRNA export, mRNA stability and/or translation. Involved in various cellular processes, such as mRNA storage into stress granules, apoptosis, interferon response, glial cell fate and development. Binds to the 5'-NACUAAY-N(1,20)-UAAY-3' RNA core sequence. Acts as a mRNA modification reader that specifically recognizes and binds mRNA transcripts modified by internal N(7)-methylguanine (m7G). Promotes the formation of circular RNAs (circRNAs): acts by binding to sites flanking circRNA-forming exons. CircRNAs are produced by back-splicing circularization of pre-mRNAs. Required to protect and promote stability of mRNAs which promotes oligodendrocyte differentiation. Acts as an important regulator of muscle development: required during early skeletal myofibril formation by regulating the accumulation of the muscle-specific tropomyosin-3 (tpm3) transcripts. This chain is Protein quaking-A, found in Danio rerio (Zebrafish).